Here is a 189-residue protein sequence, read N- to C-terminus: MAQGHTTASAILHNFRELIKEPKGLDDAANYLFQGLLDDVVAGIFIEIHHLRKTGNLTALDGVGEENAESAYRICEMPNLDIFGISTAKKPMDCTCPNCDRLVAATRFAPHLEKCMGMGRISSRIASRRLATKEGSSASSTSTSTYLQSGNTGGTDDEDDVDWSSDKRKKKSTQNSRNNGSKKNNGKTF.

The segment at 94–115 adopts an SGF11-type zinc-finger fold; sequence CTCPNCDRLVAATRFAPHLEKC. The segment at 128–189 is disordered; the sequence is RRLATKEGSS…GSKKNNGKTF (62 aa). Residues 136-145 show a composition bias toward low complexity; that stretch reads SSASSTSTST. Ser-165 carries the post-translational modification Phosphoserine. The segment covering 175–189 has biased composition (low complexity); it reads NSRNNGSKKNNGKTF.

The protein belongs to the SGF11 family. In terms of assembly, component of some SAGA transcription coactivator-HAT complexes, at least composed of Ada2b, not/nonstop, Pcaf/Gcn5, Sgf11 and Spt3. Within the SAGA complex, Sgf11, e(y)2, and not/nonstop form an additional subcomplex of SAGA called the DUB module (deubiquitination module). Interacts directly with not/nonstop. Interacts with the AMEX complex component xmas-2. Interacts with Cbp80; important for promoter recruitment of Sgf11 that is not associated with the DUB module.

It localises to the nucleus. The protein resides in the nucleoplasm. Its subcellular location is the cytoplasm. Functionally, component of the transcription regulatory histone acetylation (HAT) complex SAGA, a multiprotein complex that activates transcription by remodeling chromatin and mediating histone acetylation and deubiquitination. Within the SAGA complex, participates in a subcomplex that specifically deubiquitinates histone H2B. The SAGA complex is recruited to specific gene promoters by activators, where it is required for transcription. Required for nuclear receptor-mediated transactivation. Binds independently on SAGA to promoters in an RNA-dependent manner. Binds to mRNA and is essential for total mRNA export from the nucleus. Required to counteract heterochromatin silencing. Controls the development of neuronal connectivity in visual system by being required for accurate axon targeting in the optic lobe. Required for expression of ecdysone-induced genes such as br/broad. The polypeptide is SAGA-associated factor 11 homolog (Drosophila virilis (Fruit fly)).